The primary structure comprises 304 residues: Large ribosomal subunit protein uL2 (304 aa).

The interval 246-282 is disordered; the sequence is HTRGTAMNPVDHPHGGGEGRTRGKHPESPWGWKTKGY. Basic and acidic residues predominate over residues 256 to 272; sequence DHPHGGGEGRTRGKHPE.

It belongs to the universal ribosomal protein uL2 family. As to quaternary structure, part of the 50S ribosomal subunit. Forms a bridge to the 30S subunit in the 70S ribosome.

Functionally, one of the primary rRNA binding proteins. Required for association of the 30S and 50S subunits to form the 70S ribosome, for tRNA binding and peptide bond formation. It has been suggested to have peptidyltransferase activity; this is somewhat controversial. Makes several contacts with the 16S rRNA in the 70S ribosome. In Aquifex aeolicus (strain VF5), this protein is Large ribosomal subunit protein uL2.